Here is a 434-residue protein sequence, read N- to C-terminus: Zinc finger and BTB domain-containing protein 8A (434 aa).

In terms of domain architecture, BTB spans 24-92 (CDCSILVEGK…VYSGKLSLTG (69 aa)). The interval 134-238 (SLSDKDTGSN…SGNHVSQSEE (105 aa)) is disordered. Phosphoserine is present on residues serine 161 and serine 167. Residues lysine 172, lysine 176, and lysine 193 each participate in a glycyl lysine isopeptide (Lys-Gly) (interchain with G-Cter in SUMO2) cross-link. A compositionally biased stretch (basic and acidic residues) spans 192–202 (AKHEQRKEPSK). Positions 226–238 (QTDSGNHVSQSEE) are enriched in polar residues. C2H2-type zinc fingers lie at residues 275-297 (FKCP…LRCH) and 303-326 (YPCQ…RTIH). Lysine 430 participates in a covalent cross-link: Glycyl lysine isopeptide (Lys-Gly) (interchain with G-Cter in SUMO2).

It is found in the nucleus. Its function is as follows. May be involved in transcriptional regulation. In Mus musculus (Mouse), this protein is Zinc finger and BTB domain-containing protein 8A (Zbtb8a).